The primary structure comprises 131 residues: Profilin-6 (131 aa).

This sequence belongs to the profilin family. In terms of assembly, occurs in many kinds of cells as a complex with monomeric actin in a 1:1 ratio.

The protein localises to the cytoplasm. It localises to the cytoskeleton. In terms of biological role, binds to actin and affects the structure of the cytoskeleton. At high concentrations, profilin prevents the polymerization of actin, whereas it enhances it at low concentrations. By binding to PIP2, it inhibits the formation of IP3 and DG. This Hevea brasiliensis (Para rubber tree) protein is Profilin-6.